The following is a 356-amino-acid chain: Ferrochelatase (356 aa).

Positions 214 and 295 each coordinate Fe cation.

The protein belongs to the ferrochelatase family.

The protein resides in the cytoplasm. The enzyme catalyses heme b + 2 H(+) = protoporphyrin IX + Fe(2+). It functions in the pathway porphyrin-containing compound metabolism; protoheme biosynthesis; protoheme from protoporphyrin-IX: step 1/1. Its function is as follows. Catalyzes the ferrous insertion into protoporphyrin IX. The polypeptide is Ferrochelatase (Paraburkholderia phytofirmans (strain DSM 17436 / LMG 22146 / PsJN) (Burkholderia phytofirmans)).